A 181-amino-acid chain; its full sequence is CDP-diacylglycerol--glycerol-3-phosphate 3-phosphatidyltransferase (181 aa).

Helical transmembrane passes span 8–28, 35–55, 64–84, and 148–168; these read PNYLTIARIMVIPVIILLFYI, KLGALLFVLASITDFFDGYIA, FGKMFDPIADKLLVGCVTIML, and IIYLDIVGEIILWIAAFLTII.

Belongs to the CDP-alcohol phosphatidyltransferase class-I family.

The protein resides in the cell membrane. It carries out the reaction a CDP-1,2-diacyl-sn-glycerol + sn-glycerol 3-phosphate = a 1,2-diacyl-sn-glycero-3-phospho-(1'-sn-glycero-3'-phosphate) + CMP + H(+). It participates in phospholipid metabolism; phosphatidylglycerol biosynthesis; phosphatidylglycerol from CDP-diacylglycerol: step 1/2. Its function is as follows. This protein catalyzes the committed step to the synthesis of the acidic phospholipids. The protein is CDP-diacylglycerol--glycerol-3-phosphate 3-phosphatidyltransferase (pgsA) of Rickettsia prowazekii (strain Madrid E).